The chain runs to 409 residues: 3-isopropylmalate dehydrogenase 1, chloroplastic (409 aa).

The transit peptide at 1–37 (MAAFLQTNISLNAIKIVPGKYSSLTDHQFRAPYRIRC) directs the protein to the chloroplast. Ser74 is modified (phosphoserine). Residue 118–133 (IGGYKWDKNEKHLRPE) participates in NAD(+) binding. Arg140, Arg150, and Arg178 together coordinate substrate. Position 238 (Asn238) interacts with NAD(+). Asp268 is a substrate binding site. Residue Asp268 coordinates Mg(2+). NAD(+) is bound at residue Asn269. The Mg(2+) site is built by Asp292 and Asp296. 322-338 (EPIHGSAPDIAGQDKAN) contacts NAD(+).

It belongs to the isocitrate and isopropylmalate dehydrogenases family. Homodimer. It depends on Mg(2+) as a cofactor. Mn(2+) serves as cofactor. As to expression, highly expressed in seedlings, leaves, stems and roots and, to a lower extent, in flowers, pollen and siliques.

Its subcellular location is the plastid. The protein localises to the chloroplast stroma. It carries out the reaction (2R,3S)-3-isopropylmalate + NAD(+) = 4-methyl-2-oxopentanoate + CO2 + NADH. The protein operates within amino-acid biosynthesis; L-leucine biosynthesis; L-leucine from 3-methyl-2-oxobutanoate: step 3/4. It participates in secondary metabolite biosynthesis. Its activity is regulated as follows. Regulated by a thiol-based redox modification; oxidation by CuCl(2) leads to a decreased activity. In terms of biological role, involved in both glucosinolate and leucine biosynthesis; catalyzes the oxidative decarboxylation step in both leucine biosynthesis (primary metabolism) and methionine chain elongation of glucosinolates (specialized metabolism). Catalyzes the oxidation of 3-carboxy-2-hydroxy-4-methylpentanoate (3-isopropylmalate, 3-IPM) to 3-carboxy-4-methyl-2-oxopentanoate. The product decarboxylates to 4-methyl-2 oxopentanoate. Required during pollen development and involved in embryo sac development. More active on 3-isopropylmalate and NAD(+) than towards D-malate. This chain is 3-isopropylmalate dehydrogenase 1, chloroplastic, found in Arabidopsis thaliana (Mouse-ear cress).